The sequence spans 1241 residues: Interphotoreceptor matrix proteoglycan 2 (1241 aa).

A signal peptide spans 1–28 (MIMFLPLGRISLGILILFLTGGNLVSVS). Topologically, residues 29–1104 (EEIQDRMHAV…CEEFVSEPFV (1076 aa)) are extracellular. Thr193 carries O-linked (GalNAc...) threonine glycosylation. The interval 206-234 (AASERSAASPQESISNEIENVTEQPTPPA) is disordered. A compositionally biased stretch (polar residues) spans 211-229 (SAASPQESISNEIENVTEQ). An N-linked (GlcNAc...) asparagine glycan is attached at Asn225. O-linked (GalNAc...) threonine glycosylation is present at Thr231. Residues 235–349 (AEQIAEFSIQ…KPTAVYTISN (115 aa)) enclose the SEA 1 domain. Residues 255–263 (RDPSSALYR) are hyaluronan-binding motif involved in chondroitin sulfate A-binding. N-linked (GlcNAc...) asparagine glycosylation is found at Asn297, Asn316, and Asn366. O-linked (GalNAc...) threonine glycans are attached at residues Thr429, Thr430, and Thr431. Over residues 431 to 443 (TISPFGFSSGPPS) the composition is skewed to low complexity. 2 disordered regions span residues 431 to 456 (TISP…STLG) and 500 to 520 (VAPE…TEES). A glycan (O-linked (GalNAc...) threonine) is linked at Thr817. Residues Asn841, Asn945, and Asn959 are each glycosylated (N-linked (GlcNAc...) asparagine). An SEA 2 domain is found at 900 to 1013 (GALVVFFSLR…YSLDVESGDD (114 aa)). EGF-like domains follow at residues 1013–1054 (DANP…LPCQ) and 1055–1096 (SVCD…QHCE). Intrachain disulfides connect Cys1017-Cys1028, Cys1022-Cys1039, Cys1041-Cys1053, Cys1057-Cys1070, Cys1064-Cys1080, and Cys1082-Cys1095. The hyaluronan-binding motif involved in chondroitin sulfate C-binding stretch occupies residues 1083–1091 (RVGSNWWYR). A helical membrane pass occupies residues 1105–1125 (IGITIASVVSLLLVASAVVFF). Over 1126–1241 (LAKMLQAQNV…FVREHEMEEL (116 aa)) the chain is Cytoplasmic. The segment at 1128–1136 (KMLQAQNVR) is hyaluronan-binding motif involved in chondroitin sulfate A- and C-binding. The tract at residues 1139–1145 (RQRPTNR) is hyaluronan-binding motif involved in chondroitin sulfate C-binding. Residues 1210–1218 (KEEIQERMR) form a hyaluronan-binding motif involved in chondroitin sulfate A- and C-binding motif region.

As to expression, expressed in the pineal gland and the outer layer of the retina.

It localises to the photoreceptor outer segment membrane. Its subcellular location is the photoreceptor inner segment membrane. The protein resides in the secreted. The protein localises to the extracellular space. It is found in the extracellular matrix. It localises to the interphotoreceptor matrix. Chondroitin sulfate- and hyaluronan-binding proteoglycan involved in the organization of interphotoreceptor matrix; may participate in the maturation and maintenance of the light-sensitive photoreceptor outer segment. Binds heparin. The chain is Interphotoreceptor matrix proteoglycan 2 (Impg2) from Rattus norvegicus (Rat).